The following is a 433-amino-acid chain: C4-dicarboxylate transport protein (433 aa).

The next 8 helical transmembrane spans lie at 8-28 (ILYVQVLFAICIGILLGHFWP), 44-64 (LIKMIIGPIIFCTVVTGIAGM), 78-98 (LLYFEVVSTFALLIGLGAAHL), 148-168 (GDILQILLVSLFFGAALAVLG), 188-208 (IVHVITKVAPIGAFGAMAFTI), 222-242 (LIGTFYFTAIVFVLVVLGTIA), 307-327 (IYMTMAVIFIAQATGIELTLM), and 355-375 (AATLAVVPTIPVAGMVLILGI).

The protein belongs to the dicarboxylate/amino acid:cation symporter (DAACS) (TC 2.A.23) family.

It is found in the cell inner membrane. Its function is as follows. Responsible for the transport of dicarboxylates such as succinate, fumarate, and malate from the periplasm across the membrane. This is C4-dicarboxylate transport protein from Cupriavidus taiwanensis (strain DSM 17343 / BCRC 17206 / CCUG 44338 / CIP 107171 / LMG 19424 / R1) (Ralstonia taiwanensis (strain LMG 19424)).